Here is a 1476-residue protein sequence, read N- to C-terminus: Glucosyltransferase-I (1476 aa).

The N-terminal stretch at 1 to 34 is a signal peptide; that stretch reads MDKKVRYKLRKVKKRWVTVSVASAVMTLTTLSGG. Disordered stretches follow at residues 42-89 and 102-141; these read ESKS…ISSS and PYTV…TEAD. Composition is skewed to polar residues over residues 43–81 and 102–139; these read SKSQ…QTNH and PYTV…QTTE. Cell wall-binding repeat units follow at residues 159 to 178 and 179 to 199; these read LPNV…NGKV and RTNF…TGAY. Residues 200–1051 are catalytic; approximate; that stretch reads TDTSIDTVNK…NTYFNISDNK (852 aa). Cell wall-binding repeat units lie at residues 1087-1106, 1107-1126, 1170-1189, 1214-1234, 1235-1254, 1279-1299, 1300-1319, 1344-1364, 1365-1384, 1409-1429, and 1430-1449; these read KNTF…NGYM, VTGA…NGLQ, SVGL…MGYQ, RNRF…DGAA, VTGS…NGVQ, RNRF…NGYA, and VTGA…NGVQ.

This sequence belongs to the glycosyl hydrolase 70 family.

The protein resides in the secreted. It carries out the reaction [(1-&gt;6)-alpha-D-glucosyl](n) + sucrose = [(1-&gt;6)-alpha-D-glucosyl](n+1) + D-fructose. Functionally, production of extracellular glucans, that are thought to play a key role in the development of the dental plaque because of their ability to adhere to smooth surfaces and mediate the aggregation of bacterial cells and food debris. This is Glucosyltransferase-I (gtfB) from Streptococcus mutans serotype c (strain ATCC 700610 / UA159).